The following is a 597-amino-acid chain: MQHIRNFSIIAHIDHGKSTLADRLIQRCGGLAAREMSAQVLDSMEIERERGITIKAQTAALQYQAQDGKTYNLNLIDTPGHVDFSYEVSRSLSACEGALLVVDASQGVEAQTVANCYTAIELGVEVLPVLNKMDLPQADPDAARQEVEDVIGIDASNAVLASAKTGMGIDEILETIVARVPAPQGNPDGALQALIIDSWFDNYVGVVMLVRIINGVLRPKDKILLMASGATHLCEQVGVFTPKSQPRTELSAGEVGFIIAGIKELAHAKVGDTVTLAGKPANAPLPGFKEVKPQVFAGLYPVESSEYDQLRDSLEKLKLNDAALMFEPEVSQALGFGFRCGFLGLLHMEIVQERLEREFDMDIITTAPSVVYEVEQRDGSIEIVDSPARMPEVGKIADIREPIVKVTLFMPQEYVGPVMTLCNNKRGVQINMSYHGRQVHLTYEIPLAEIVLDFFDKLKSVSRGYASMDYEFLEYRSADVVRVDLLINGDRVDALAMIVHRANARYRARDVVTRMRGLIPRQMFDVAIQAAIGAEVIARENVKALRKNVLAKCYGGDITRKKKLLEKQKAGKKRMKQVGSVEIPQEAFLAILQVEDK.

Residues 2-184 (QHIRNFSIIA…TIVARVPAPQ (183 aa)) form the tr-type G domain. Residues 14-19 (DHGKST) and 131-134 (NKMD) contribute to the GTP site.

The protein belongs to the TRAFAC class translation factor GTPase superfamily. Classic translation factor GTPase family. LepA subfamily.

The protein localises to the cell inner membrane. The enzyme catalyses GTP + H2O = GDP + phosphate + H(+). Its function is as follows. Required for accurate and efficient protein synthesis under certain stress conditions. May act as a fidelity factor of the translation reaction, by catalyzing a one-codon backward translocation of tRNAs on improperly translocated ribosomes. Back-translocation proceeds from a post-translocation (POST) complex to a pre-translocation (PRE) complex, thus giving elongation factor G a second chance to translocate the tRNAs correctly. Binds to ribosomes in a GTP-dependent manner. The chain is Elongation factor 4 from Bordetella petrii (strain ATCC BAA-461 / DSM 12804 / CCUG 43448).